We begin with the raw amino-acid sequence, 1357 residues long: DNA-directed RNA polymerase subunit beta (1357 aa).

Belongs to the RNA polymerase beta chain family. As to quaternary structure, the RNAP catalytic core consists of 2 alpha, 1 beta, 1 beta' and 1 omega subunit. When a sigma factor is associated with the core the holoenzyme is formed, which can initiate transcription.

It catalyses the reaction RNA(n) + a ribonucleoside 5'-triphosphate = RNA(n+1) + diphosphate. Functionally, DNA-dependent RNA polymerase catalyzes the transcription of DNA into RNA using the four ribonucleoside triphosphates as substrates. The protein is DNA-directed RNA polymerase subunit beta of Pseudomonas savastanoi pv. phaseolicola (strain 1448A / Race 6) (Pseudomonas syringae pv. phaseolicola (strain 1448A / Race 6)).